The chain runs to 366 residues: HNYNARLCAERSVRMPFLDSQTGVAQSNCYIWMEKRHRGQASAPGQLYTYPSRRWRKKRRAHPPEDPRLSFPSLKPDPEQMLKKEGLIPPDGSSLEALLRSDPIEKRIIPDPRDDDSLTEFPTLSRSARKRILEPDDFLDDLDDEDYEEDTPKRRKGKSKGKGIGGARKKLDAAALDDRDKPYACDICGKRYKNRPGLSYHYAHSHLVDEEGAGAEDKEDSQPPTPIMHRSEEQKSKKGPDGLALPNNYCDFCLGDSNTNKKSNQPEELVSCSDCGRSGHPSCLQFTPVMMAAVKTYRWQCIECKCCNICGTSENDDQLLFCDDCDRGYHMYCLSPPVAEPPEGSWSCHLCLDLLKDKASIYQKQS.

Disordered regions lie at residues Ala41–Ser94 and Asp140–Ala167. Residues Pro76 to Gly86 are compositionally biased toward basic and acidic residues. Over residues Asp140–Glu149 the composition is skewed to acidic residues. The segment at Tyr183–His206 adopts a C2H2-type zinc-finger fold. A disordered region spans residues Glu211–Leu243. Residues His229 to Pro240 show a composition bias toward basic and acidic residues. PHD-type zinc fingers lie at residues Asn247–Cys307 and Cys304–Leu354.

Belongs to the requiem/DPF family.

It is found in the cytoplasm. The protein resides in the nucleus. Its function is as follows. May be a transcription factor required for the apoptosis response following survival factor withdrawal from myeloid cells. Might also have a role in the development and maturation of lymphoid cells. This is Zinc finger protein ubi-d4 B (req-b) from Xenopus laevis (African clawed frog).